The primary structure comprises 1854 residues: Calcium-channel protein cch1 (1854 aa).

Positions 1–15 (MSSSSNSDPSSSPDN) are enriched in low complexity. Residues 1–33 (MSSSSNSDPSSSPDNTDFIPLKDNPKDTSSYIN) are disordered. Asn40 carries an N-linked (GlcNAc...) asparagine glycan. Transmembrane regions (helical) follow at residues 184-204 (HPLY…LLMI), 220-240 (IIVI…LFGF), and 274-294 (DFVA…QGIF). A glycan (N-linked (GlcNAc...) asparagine) is linked at Asn310. 8 consecutive transmembrane segments (helical) span residues 328-348 (PLVQ…ILGV), 427-447 (FFNS…TDIM), 461-481 (LFII…IAVV), 514-534 (YLFY…VTLC), 549-569 (LIFY…RFFA), 581-601 (YTNL…LPSI), 606-626 (VAFG…ILLI), and 642-662 (QLLN…LCAV). The N-linked (GlcNAc...) asparagine glycan is linked to Asn699. The chain crosses the membrane as a helical span at residues 723-743 (FFTLWFLFSNNVVLSMFIAVI). Asn786 carries N-linked (GlcNAc...) asparagine glycosylation. The next 3 membrane-spanning stretches (helical) occupy residues 946-966 (VFIY…TPIY), 980-1000 (FVWT…IKII), and 1021-1041 (FFVL…HALL). N-linked (GlcNAc...) asparagine glycosylation occurs at Asn1058. Transmembrane regions (helical) follow at residues 1075-1095 (FFKI…FALW) and 1148-1168 (FPHA…VDIM). Residue Asn1184 is glycosylated (N-linked (GlcNAc...) asparagine). 4 consecutive transmembrane segments (helical) span residues 1193–1213 (FVLF…AIII), 1274–1294 (FTGL…PCPI), 1302–1322 (SIFL…VYGL), and 1331–1351 (FWNM…IAIL). Asn1356 carries N-linked (GlcNAc...) asparagine glycosylation. 3 helical membrane passes run 1358 to 1378 (SLTL…IPKF), 1393 to 1413 (PSIF…AIAF), and 1486 to 1506 (FIAW…TVVF). N-linked (GlcNAc...) asparagine glycans are attached at residues Asn1508 and Asn1773. The segment at 1764–1792 (TIASGEGDDNHSVEDHLKVPTDNEPRRSP) is disordered. Residues 1771–1790 (DDNHSVEDHLKVPTDNEPRR) are compositionally biased toward basic and acidic residues.

Belongs to the calcium channel alpha-1 subunit (TC 1.A.1.11) family. In terms of assembly, interacts with yam8 to form a Ca(2+) influx channel.

It localises to the cell membrane. In terms of biological role, voltage-gated, high-affinity calcium channel that functions together with yam8 to mediate calcium entry into cells. Required during conditions of environmental stress. The chain is Calcium-channel protein cch1 (cch1) from Schizosaccharomyces pombe (strain 972 / ATCC 24843) (Fission yeast).